The primary structure comprises 464 residues: Argininosuccinate lyase (464 aa).

Belongs to the lyase 1 family. Argininosuccinate lyase subfamily.

The protein localises to the cytoplasm. The enzyme catalyses 2-(N(omega)-L-arginino)succinate = fumarate + L-arginine. It functions in the pathway amino-acid biosynthesis; L-arginine biosynthesis; L-arginine from L-ornithine and carbamoyl phosphate: step 3/3. This chain is Argininosuccinate lyase, found in Stutzerimonas stutzeri (strain A1501) (Pseudomonas stutzeri).